Here is a 541-residue protein sequence, read N- to C-terminus: Long-chain-fatty-acid--CoA ligase (541 aa).

A Mg(2+)-binding site is contributed by threonine 184. ATP contacts are provided by valine 231 and tryptophan 234. Residues glycine 302, glutamine 322, glycine 323, and threonine 327 each contribute to the tetradecanoyl-AMP site. 2 residues coordinate ATP: glycine 323 and threonine 327. Glutamate 328 is a binding site for Mg(2+). ATP-binding residues include aspartate 418, lysine 435, lysine 439, and tryptophan 444. Aspartate 418, lysine 435, and lysine 439 together coordinate tetradecanoyl-AMP.

The protein belongs to the ATP-dependent AMP-binding enzyme family. In terms of assembly, forms a domain swapped homodimer. Mg(2+) is required as a cofactor.

The enzyme catalyses a long-chain fatty acid + ATP + CoA = a long-chain fatty acyl-CoA + AMP + diphosphate. It carries out the reaction tetradecanoate + ATP + CoA = tetradecanoyl-CoA + AMP + diphosphate. The catalysed reaction is hexadecanoate + ATP + CoA = hexadecanoyl-CoA + AMP + diphosphate. The protein operates within lipid metabolism; fatty acid metabolism. Its function is as follows. Catalyzes the esterification of a number of long chain fatty acids with CoA, resulting in the formation of long-chain fatty acyl-CoA. Myristate (C14) is the most efficiently processed fatty acid, followed by palmitate (C16). Also catalyzes the esterification of stearate (C18) and laurate (C12), but at lower efficiency. Does not catalyze the esterification of the unsaturated fatty acids mysteroleic and palmitoleic acids in vitro. This is Long-chain-fatty-acid--CoA ligase from Thermus thermophilus (strain ATCC 27634 / DSM 579 / HB8).